The sequence spans 411 residues: Phosphoglycerate kinase (411 aa).

The segment at 1–24 is disordered; sequence MTGLCPLHQPSPLDHPHSGGTPMQ. Residues 41 to 43, R56, 79 to 82, R139, and R172 contribute to the substrate site; these read DYN and HFGR. ATP contacts are provided by residues K222, G310, E341, and 369 to 372; that span reads GGDS.

The protein belongs to the phosphoglycerate kinase family. Monomer.

It is found in the cytoplasm. It catalyses the reaction (2R)-3-phosphoglycerate + ATP = (2R)-3-phospho-glyceroyl phosphate + ADP. The protein operates within carbohydrate degradation; glycolysis; pyruvate from D-glyceraldehyde 3-phosphate: step 2/5. In Deinococcus radiodurans (strain ATCC 13939 / DSM 20539 / JCM 16871 / CCUG 27074 / LMG 4051 / NBRC 15346 / NCIMB 9279 / VKM B-1422 / R1), this protein is Phosphoglycerate kinase.